Reading from the N-terminus, the 603-residue chain is Bifunctional 3-dehydroquinate dehydratase/shikimate dehydrogenase, chloroplastic (603 aa).

A compositionally biased stretch (polar residues) spans Met1 to Leu10. The segment at Met1 to Leu22 is disordered. Residues Met1–Arg66 constitute a chloroplast transit peptide. Low complexity predominate over residues Pro13 to Leu22. The 3-dehydroquinate dehydratase stretch occupies residues Ile96 to Leu313. Residues Glu124, Arg126, and Arg155 each coordinate 3-dehydroshikimate. The Proton acceptor; for 3-dehydroquinate dehydratase activity role is filled by His214. Residues Lys241, Arg279, Ser300, and Gln304 each coordinate 3-dehydroshikimate. The Schiff-base intermediate with substrate; for 3-dehydroquinate dehydratase activity role is filled by Lys241. Residues Ile328–Leu558 are shikimate dehydrogenase. Shikimate is bound by residues Ser336, Ser338, Thr381, Lys385, Asn406, and Asp423. Residue Lys385 is the For shikimate dehydrogenase activity of the active site. Asp423 serves as the catalytic For shikimate dehydrogenase activity. Ala461, Gly463, Ala464, Asn483, Thr485, Arg488, Met525, and Ala548 together coordinate NADP(+). Tyr550 provides a ligand contact to shikimate. Residue Gly571 coordinates NADP(+). Shikimate contacts are provided by Gln578 and Gln582.

The protein in the N-terminal section; belongs to the type-I 3-dehydroquinase family. It in the C-terminal section; belongs to the shikimate dehydrogenase family. As to quaternary structure, monomer.

It is found in the plastid. Its subcellular location is the chloroplast. The catalysed reaction is 3-dehydroquinate = 3-dehydroshikimate + H2O. The enzyme catalyses shikimate + NADP(+) = 3-dehydroshikimate + NADPH + H(+). It participates in metabolic intermediate biosynthesis; chorismate biosynthesis; chorismate from D-erythrose 4-phosphate and phosphoenolpyruvate: step 3/7. The protein operates within metabolic intermediate biosynthesis; chorismate biosynthesis; chorismate from D-erythrose 4-phosphate and phosphoenolpyruvate: step 4/7. Functionally, bifunctional dehydroquinate dehydratase-shikimate dehydrogenase enzyme that catalyzes two steps in the chorismate biosynthesis pathway. The polypeptide is Bifunctional 3-dehydroquinate dehydratase/shikimate dehydrogenase, chloroplastic (Arabidopsis thaliana (Mouse-ear cress)).